We begin with the raw amino-acid sequence, 122 residues long: Large ribosomal subunit protein uL14 (122 aa).

It belongs to the universal ribosomal protein uL14 family. Part of the 50S ribosomal subunit. Forms a cluster with proteins L3 and L19. In the 70S ribosome, L14 and L19 interact and together make contacts with the 16S rRNA in bridges B5 and B8.

Its function is as follows. Binds to 23S rRNA. Forms part of two intersubunit bridges in the 70S ribosome. The chain is Large ribosomal subunit protein uL14 from Helicobacter pylori (strain J99 / ATCC 700824) (Campylobacter pylori J99).